The chain runs to 347 residues: tRNA pseudouridine synthase D (347 aa).

Aspartate 81 serves as the catalytic Nucleophile. The TRUD domain occupies 158 to 305 (GVPNYFGSQR…RHDRRDIALK (148 aa)).

This sequence belongs to the pseudouridine synthase TruD family.

The catalysed reaction is uridine(13) in tRNA = pseudouridine(13) in tRNA. In terms of biological role, responsible for synthesis of pseudouridine from uracil-13 in transfer RNAs. This Vibrio campbellii (strain ATCC BAA-1116) protein is tRNA pseudouridine synthase D.